A 198-amino-acid chain; its full sequence is NAD(P)H quinone oxidoreductase PST1 (198 aa).

The Flavodoxin-like domain occupies 6-192 (VAIIIYSLYH…AIAKQQGEDF (187 aa)). Residues 12-16 (SLYHH) and 112-164 (VFVW…SPWG) contribute to the FMN site.

Belongs to the WrbA family. Requires FMN as cofactor.

Its subcellular location is the cell membrane. It carries out the reaction a quinone + NADH + H(+) = a quinol + NAD(+). The enzyme catalyses a quinone + NADPH + H(+) = a quinol + NADP(+). Functionally, flavodoxin-like protein (FLP) that plays a role in cell wall integrity, oxidative stress protection and virulence. FLPs act as NAD(P)H quinone oxidoreductases. Reduces ubiquinone (coenzyme Q), enabling it to serve as an antioxidant in the membrane. In Candida albicans (strain SC5314 / ATCC MYA-2876) (Yeast), this protein is NAD(P)H quinone oxidoreductase PST1.